Consider the following 340-residue polypeptide: Protein-arginine kinase (340 aa).

The 222-residue stretch at 21 to 242 (VVLSSRIRLA…EQIIMQERVA (222 aa)) folds into the Phosphagen kinase C-terminal domain. ATP contacts are provided by residues 24–28 (SSRIR), His-79, Arg-113, 164–168 (RASVM), and 195–200 (RGIYGE).

The protein belongs to the ATP:guanido phosphotransferase family.

The catalysed reaction is L-arginyl-[protein] + ATP = N(omega)-phospho-L-arginyl-[protein] + ADP + H(+). Its function is as follows. Catalyzes the specific phosphorylation of arginine residues in proteins. The protein is Protein-arginine kinase of Listeria monocytogenes serotype 4b (strain CLIP80459).